The following is a 467-amino-acid chain: ATP synthase subunit beta (467 aa).

150–157 contacts ATP; the sequence is GGAGVGKT.

Belongs to the ATPase alpha/beta chains family. As to quaternary structure, F-type ATPases have 2 components, CF(1) - the catalytic core - and CF(0) - the membrane proton channel. CF(1) has five subunits: alpha(3), beta(3), gamma(1), delta(1), epsilon(1). CF(0) has three main subunits: a(1), b(2) and c(9-12). The alpha and beta chains form an alternating ring which encloses part of the gamma chain. CF(1) is attached to CF(0) by a central stalk formed by the gamma and epsilon chains, while a peripheral stalk is formed by the delta and b chains.

The protein resides in the cell inner membrane. It catalyses the reaction ATP + H2O + 4 H(+)(in) = ADP + phosphate + 5 H(+)(out). Functionally, produces ATP from ADP in the presence of a proton gradient across the membrane. The catalytic sites are hosted primarily by the beta subunits. The chain is ATP synthase subunit beta from Vibrio vulnificus (strain YJ016).